The following is a 435-amino-acid chain: U-box domain-containing protein 21 (435 aa).

Residues 30 to 104 (TIPPEFQCPI…QGWCVEKGSP (75 aa)) enclose the U-box domain. ARM repeat units lie at residues 202 to 241 (LEGI…EILS), 245 to 285 (TRVH…QMVL), 288 to 327 (PEIA…AICE), and 329 to 369 (EHGR…KLWK).

It catalyses the reaction S-ubiquitinyl-[E2 ubiquitin-conjugating enzyme]-L-cysteine + [acceptor protein]-L-lysine = [E2 ubiquitin-conjugating enzyme]-L-cysteine + N(6)-ubiquitinyl-[acceptor protein]-L-lysine.. It participates in protein modification; protein ubiquitination. In terms of biological role, functions as an E3 ubiquitin ligase. This Arabidopsis thaliana (Mouse-ear cress) protein is U-box domain-containing protein 21 (PUB21).